Here is a 601-residue protein sequence, read N- to C-terminus: Specifically androgen-regulated gene protein (601 aa).

3 disordered regions span residues 1 to 41, 56 to 538, and 551 to 601; these read MPER…SSYD, ETIG…TGKD, and EQEQ…LLKE. The segment covering 20–39 has biased composition (low complexity); the sequence is GSCDSMMSSTSTRSGSSDSS. The span at 100 to 118 shows a compositional bias: polar residues; that stretch reads TITQQGRTPRTVTESSSSH. Phosphoserine occurs at positions 131 and 133. Positions 142-157 are enriched in polar residues; sequence RSQNFRKSTTQASSHN. A compositionally biased stretch (low complexity) spans 174 to 190; that stretch reads SQSSQPRQAPASPQEAA. The span at 203-213 shows a compositional bias: basic and acidic residues; it reads AFRDTQPEQCR. 2 stretches are compositionally biased toward polar residues: residues 224 to 236 and 307 to 316; these read QGHT…PSSS and LKSSRSSFHS. A compositionally biased stretch (basic and acidic residues) spans 342-352; that stretch reads EQRKARKEALE. Positions 384-414 are enriched in low complexity; the sequence is LSPAPGLAQPAAPAQASAAIPAAGKALAQAP. Residues 415–429 are compositionally biased toward pro residues; it reads APAPGPAQGPLPMKS. A compositionally biased stretch (polar residues) spans 464-485; the sequence is LTLQESNTPGLRQMNFKSNTLE. Residue Ser-519 is modified to Phosphoserine. A compositionally biased stretch (basic and acidic residues) spans 585–601; the sequence is PNEHRREALKKLGLLKE.

The protein belongs to the SARG family. In terms of tissue distribution, highly expressed in prostate.

The protein resides in the cytoplasm. In terms of biological role, putative androgen-specific receptor. This Homo sapiens (Human) protein is Specifically androgen-regulated gene protein (SARG).